The chain runs to 140 residues: FLYWCH family member 2 (140 aa).

Disordered regions lie at residues 1–39 (MPLPEPSEQEGESVKAGQEPSSKPGTEVVPAAPRKPREF) and 83–140 (THPE…GKSL). Serine 21 is subject to Phosphoserine. Residues 98–114 (PEQKRSRQDPGADRTED) are compositionally biased toward basic and acidic residues. Positions 118–127 (AAGPPEAAGE) are enriched in low complexity.

The chain is FLYWCH family member 2 (FLYWCH2) from Pongo abelii (Sumatran orangutan).